The primary structure comprises 359 residues: Spermine synthase (359 aa).

The region spanning 53 to 304 is the PABS domain; the sequence is SGWFSEPHPR…GVIGFVLCST (252 aa). Glutamine 99 lines the S-adenosyl 3-(methylsulfanyl)propylamine pocket. Tyrosine 129 provides a ligand contact to spermidine. Glutamine 130 is an S-adenosyl 3-(methylsulfanyl)propylamine binding site. A spermidine-binding site is contributed by aspartate 154. S-adenosyl 3-(methylsulfanyl)propylamine-binding positions include glutamate 174 and 205–206; that span reads DA. The Proton acceptor role is filled by aspartate 224. Tyrosine 292 is a binding site for putrescine.

Belongs to the spermidine/spermine synthase family. As to quaternary structure, heterodimer. Component of a multiprotein complex. Interacts with SPDSYN1 and SPDSYN2. In terms of tissue distribution, expressed predominantly in stem internodes, flower buds and roots.

The catalysed reaction is S-adenosyl 3-(methylsulfanyl)propylamine + spermidine = spermine + S-methyl-5'-thioadenosine + H(+). Its pathway is amine and polyamine biosynthesis; spermine biosynthesis; spermine from spermidine: step 1/1. The sequence is that of Spermine synthase (SPMS) from Arabidopsis thaliana (Mouse-ear cress).